The primary structure comprises 373 residues: MSEKKINLLDLDRKGLRALFTEMGEKPFRADQLMKWLYHFGVSDFEQMTNINKVLRAKLAARCEVVAPEISSYQKSADGTIKFAINVGNGQEVETVYIPEEDRATLCVSSQVGCALECTFCSTAQQGFNRNLTVSEIVGQIWRVSHFLGFQKETGERPISNVVMMGMGEPLLNLKNVMPAIDIMLDDFGFSLSKRRVTVSTSGVVPALDILGDNLDVALAVSIHAPNDELRDVLVPVNKKYPLQEFLAAIRRYLAKSNANRGRVTLEYVMLDHINDSTDQAHELAELMKDTPCKINLIPFNPYPGSPYGRSSNSRIDRFSKVLMEYGLTVIVRKTRGDDIDAACGQLAGDIRDRTKRLAKKRMQDSQISVTIN.

The active-site Proton acceptor is glutamate 94. The Radical SAM core domain maps to 100–339 (EEDRATLCVS…VIVRKTRGDD (240 aa)). A disulfide bridge connects residues cysteine 107 and cysteine 344. [4Fe-4S] cluster is bound by residues cysteine 114, cysteine 118, and cysteine 121. Residues 168 to 169 (GE), serine 200, 222 to 224 (SIH), and asparagine 301 contribute to the S-adenosyl-L-methionine site. The active-site S-methylcysteine intermediate is the cysteine 344.

It belongs to the radical SAM superfamily. RlmN family. [4Fe-4S] cluster serves as cofactor.

It is found in the cytoplasm. The catalysed reaction is adenosine(2503) in 23S rRNA + 2 reduced [2Fe-2S]-[ferredoxin] + 2 S-adenosyl-L-methionine = 2-methyladenosine(2503) in 23S rRNA + 5'-deoxyadenosine + L-methionine + 2 oxidized [2Fe-2S]-[ferredoxin] + S-adenosyl-L-homocysteine. It catalyses the reaction adenosine(37) in tRNA + 2 reduced [2Fe-2S]-[ferredoxin] + 2 S-adenosyl-L-methionine = 2-methyladenosine(37) in tRNA + 5'-deoxyadenosine + L-methionine + 2 oxidized [2Fe-2S]-[ferredoxin] + S-adenosyl-L-homocysteine. Its function is as follows. Specifically methylates position 2 of adenine 2503 in 23S rRNA and position 2 of adenine 37 in tRNAs. m2A2503 modification seems to play a crucial role in the proofreading step occurring at the peptidyl transferase center and thus would serve to optimize ribosomal fidelity. This chain is Dual-specificity RNA methyltransferase RlmN, found in Shewanella loihica (strain ATCC BAA-1088 / PV-4).